The chain runs to 34 residues: Beta/mu-theraphotoxin-Pe1b (34 aa).

Intrachain disulfides connect cysteine 2/cysteine 16, cysteine 9/cysteine 21, and cysteine 15/cysteine 28.

This sequence belongs to the neurotoxin 10 (Hwtx-1) family. 54 (ProTx-1) subfamily. Expressed by the venom gland.

Its subcellular location is the secreted. Ion channel impairing toxin that inhibits several voltage-gated sodium channels. It acts by inhibiting the inward component of the sodium current and by shifting the voltage dependence of channel activation to more depolarized potentials. Its most potent activity is on Nav1.7/SCN9A (IC(50)=167 nM), followed by Nav1.6/SCN8A (IC(50)=696 nM), and Nav1.2/SCN2A (IC(50)=3.54 uM). The chain is Beta/mu-theraphotoxin-Pe1b from Phormingochilus everetti (Malaysian purple earth tiger tarantula).